Here is an 852-residue protein sequence, read N- to C-terminus: Zinc finger and SCAN domain-containing protein 29 (852 aa).

The SCAN box domain occupies 18–100 (RQRFRRFHYQ…TLVEDLEREP (83 aa)). Disordered regions lie at residues 96–182 (LERE…PKSG), 347–400 (ASHS…SAAP), and 502–557 (PNDG…RAPV). Lys-112 participates in a covalent cross-link: Glycyl lysine isopeptide (Lys-Gly) (interchain with G-Cter in SUMO2). Ser-153 is modified (phosphoserine). Lys-180 participates in a covalent cross-link: Glycyl lysine isopeptide (Lys-Gly) (interchain with G-Cter in SUMO2). A compositionally biased stretch (polar residues) spans 508-517 (ETASCPVQGT). Residues 528 to 545 (EADEATEEDSDDDEEDTE) are compositionally biased toward acidic residues. At Ser-561 the chain carries Phosphoserine. A Glycyl lysine isopeptide (Lys-Gly) (interchain with G-Cter in SUMO2) cross-link involves residue Lys-576. The disordered stretch occupies residues 603–625 (QGKGNESDCRSGRQWAKTSGEKR). A Glycyl lysine isopeptide (Lys-Gly) (interchain with G-Cter in SUMO2) cross-link involves residue Lys-652. 6 consecutive C2H2-type zinc fingers follow at residues 678 to 700 (YKCA…RRIH), 706 to 728 (YKCL…RRIH), 734 to 756 (YQCG…QRTH), 762 to 784 (YQCE…RRIH), 790 to 812 (HVCP…HRTH), and 818 to 840 (YGCH…GEIH).

The protein belongs to the krueppel C2H2-type zinc-finger protein family.

It is found in the nucleus. Its function is as follows. May be involved in transcriptional regulation. This is Zinc finger and SCAN domain-containing protein 29 (ZSCAN29) from Homo sapiens (Human).